The sequence spans 343 residues: N-acetyl-gamma-glutamyl-phosphate reductase (343 aa).

Residue Cys149 is part of the active site.

Belongs to the NAGSA dehydrogenase family. Type 1 subfamily.

It is found in the cytoplasm. It catalyses the reaction N-acetyl-L-glutamate 5-semialdehyde + phosphate + NADP(+) = N-acetyl-L-glutamyl 5-phosphate + NADPH + H(+). It participates in amino-acid biosynthesis; L-arginine biosynthesis; N(2)-acetyl-L-ornithine from L-glutamate: step 3/4. Functionally, catalyzes the NADPH-dependent reduction of N-acetyl-5-glutamyl phosphate to yield N-acetyl-L-glutamate 5-semialdehyde. The protein is N-acetyl-gamma-glutamyl-phosphate reductase of Methanococcus maripaludis (strain C7 / ATCC BAA-1331).